The sequence spans 143 residues: Large ribosomal subunit protein uL11 (143 aa).

It belongs to the universal ribosomal protein uL11 family. In terms of assembly, part of the ribosomal stalk of the 50S ribosomal subunit. Interacts with L10 and the large rRNA to form the base of the stalk. L10 forms an elongated spine to which L12 dimers bind in a sequential fashion forming a multimeric L10(L12)X complex. Post-translationally, one or more lysine residues are methylated.

Forms part of the ribosomal stalk which helps the ribosome interact with GTP-bound translation factors. The sequence is that of Large ribosomal subunit protein uL11 from Aromatoleum aromaticum (strain DSM 19018 / LMG 30748 / EbN1) (Azoarcus sp. (strain EbN1)).